The following is a 142-amino-acid chain: Ninjurin-2 (142 aa).

Residues 1–21 (MESARENIDLQPGSSDPRSQP) form a disordered region. The Extracellular segment spans residues 1–60 (MESARENIDLQPGSSDPRSQPINLNHYATKKSVAESMLDVALFMSNAMRLKAVLEQGPSS). Residues 12–21 (PGSSDPRSQP) show a composition bias toward polar residues. Residues 25–37 (NHYATKKSVAESM) are helix alpha1. Positions 38 to 57 (LDVALFMSNAMRLKAVLEQG) are helix alpha2. A helical membrane pass occupies residues 61–92 (HYYTTLVTLISLSLLLQVVIGVLLVVIARLNL). Residues 93 to 96 (NEVE) are Cytoplasmic-facing. Residues 97–126 (KQWRLNQLNNAATILVFFTVVINVFITAFG) form a helical membrane-spanning segment. Q103 is a cholesterol binding site. Residues 127 to 142 (AHKTGFLAARASRNPL) are Extracellular-facing.

It belongs to the ninjurin family. As to quaternary structure, homooligomer; in response to stimuli, homooligomerizes into filaments. In contrast to NINJ1, the filament is curved toward the intracellular space, preventing its circularization on a relatively flat membrane to mediate plasma membrane rupture: curvature is caused by cholesterol-binding at the cytoplasmic leaflet. As to expression, widely expressed. In adult, higher expression in the bone marrow and peripheral blood lymphocytes, medium in the lung, lymph node, thyroid, uterus, thymus, spleen, prostate and skeletal muscle, lower in the liver, placenta, brain, heart and kidney. In embryo, higher expression in the thymus, heart and liver, lower in the spleen, lung, brain and kidney.

The protein localises to the cell membrane. Functionally, its role in unclear. In contrast to NINJ1 paralog, does not mediate plasma membrane rupture (cytolysis) downstream of necroptotic and pyroptotic programmed cell death. While it is able to oligomerize and form filaments, filaments are curved toward the intracellular space, preventing circularization to mediate plasma membrane rupture. May act as a homophilic transmembrane adhesion molecule involved in nerve regeneration. Promotes axonal growth. The chain is Ninjurin-2 from Homo sapiens (Human).